The sequence spans 320 residues: Transaldolase (320 aa).

Residue lysine 135 is the Schiff-base intermediate with substrate of the active site.

It belongs to the transaldolase family. Type 1 subfamily. Homodimer.

The protein localises to the cytoplasm. The catalysed reaction is D-sedoheptulose 7-phosphate + D-glyceraldehyde 3-phosphate = D-erythrose 4-phosphate + beta-D-fructose 6-phosphate. The protein operates within carbohydrate degradation; pentose phosphate pathway; D-glyceraldehyde 3-phosphate and beta-D-fructose 6-phosphate from D-ribose 5-phosphate and D-xylulose 5-phosphate (non-oxidative stage): step 2/3. Transaldolase is important for the balance of metabolites in the pentose-phosphate pathway. In Colwellia psychrerythraea (strain 34H / ATCC BAA-681) (Vibrio psychroerythus), this protein is Transaldolase.